The following is an 82-amino-acid chain: Small ribosomal subunit protein bS18A (82 aa).

The protein belongs to the bacterial ribosomal protein bS18 family. Part of the 30S ribosomal subunit. Forms a tight heterodimer with protein bS6.

Its function is as follows. Binds as a heterodimer with protein bS6 to the central domain of the 16S rRNA, where it helps stabilize the platform of the 30S subunit. In Streptomyces griseus subsp. griseus (strain JCM 4626 / CBS 651.72 / NBRC 13350 / KCC S-0626 / ISP 5235), this protein is Small ribosomal subunit protein bS18A.